A 297-amino-acid polypeptide reads, in one-letter code: uncharacterized protein (297 aa).

The tract at residues M1–I29 is disordered. Residues R19–I29 are compositionally biased toward basic and acidic residues.

This is an uncharacterized protein from Caenorhabditis elegans.